The sequence spans 218 residues: MGGGWALGDLVPDIQADSTMGHIKVRDYCKDGWTIIFSHPGDYPPVCTTELGKIAAYNPEFEKRGVKLLGLSTDTVEDHQGWIKDIESYTPDAPVLYPILADPDRKITVALNMMDPDEKDANGKPLASRALHIIGPDCRLKLSLLYPGTTGRNFDEVLRVLDSLQLASKHKIATPANWQKGEPVVISPSVSDEKAKQMFPQGWETVNLPKALRMTFVD.

The 162-residue stretch at 5 to 166 folds into the Thioredoxin domain; that stretch reads WALGDLVPDI…VLRVLDSLQL (162 aa). The active-site Cysteine sulfenic acid (-SOH) intermediate is the cysteine 47.

The protein belongs to the peroxiredoxin family. Prx6 subfamily.

It is found in the nucleus. The protein localises to the cytoplasm. It carries out the reaction a hydroperoxide + [thioredoxin]-dithiol = an alcohol + [thioredoxin]-disulfide + H2O. Its function is as follows. Thiol-specific peroxidase that catalyzes the reduction of hydrogen peroxide and organic hydroperoxides to water and alcohols, respectively. Seems to contribute to the inhibition of germination during stress. Associated with the rehydration events involved in the recovery of the desiccation-tolerant moss. The sequence is that of Probable 1-Cys peroxiredoxin from Syntrichia ruralis (Great hairy screw-moss).